The chain runs to 159 residues: MNITIISVGKIKEKYLEDAVLEYKKRLSRYTKLNIIEISDEKTPENPSDVEKSKILDKEAEGIFKNLKGDFYVVTLEILGKELDSKELAKNINDLSISGKKNIVFVIGGSLGLSQKVSEKSNFKLSFSKMTFPHQLMRVILLEQIYRSFRIINGEPYHK.

Residues L76, G108, and 127-132 each bind S-adenosyl-L-methionine; that span reads FSKMTF.

The protein belongs to the RNA methyltransferase RlmH family.

It is found in the cytoplasm. It carries out the reaction pseudouridine(1915) in 23S rRNA + S-adenosyl-L-methionine = N(3)-methylpseudouridine(1915) in 23S rRNA + S-adenosyl-L-homocysteine + H(+). Specifically methylates the pseudouridine at position 1915 (m3Psi1915) in 23S rRNA. In Methanococcus vannielii (strain ATCC 35089 / DSM 1224 / JCM 13029 / OCM 148 / SB), this protein is Putative ribosomal RNA large subunit methyltransferase H.